The sequence spans 421 residues: Type II methyltransferase M.SfiI (421 aa).

It belongs to the N(4)/N(6)-methyltransferase family. N(4) subfamily.

The enzyme catalyses a 2'-deoxycytidine in DNA + S-adenosyl-L-methionine = an N(4)-methyl-2'-deoxycytidine in DNA + S-adenosyl-L-homocysteine + H(+). In terms of biological role, a beta subtype methylase, recognizes the double-stranded sequence 5'-GGCCNNNNNGGCC-3', methylates C-? on both strands, and protects the DNA from cleavage by the SfiI endonuclease. The protein is Type II methyltransferase M.SfiI of Streptomyces fimbriatus.